Consider the following 942-residue polypeptide: Alanine--tRNA ligase (942 aa).

Residues H586, H590, C695, and H699 each coordinate Zn(2+).

The protein belongs to the class-II aminoacyl-tRNA synthetase family. It depends on Zn(2+) as a cofactor.

The protein resides in the cytoplasm. It catalyses the reaction tRNA(Ala) + L-alanine + ATP = L-alanyl-tRNA(Ala) + AMP + diphosphate. Its function is as follows. Catalyzes the attachment of alanine to tRNA(Ala) in a two-step reaction: alanine is first activated by ATP to form Ala-AMP and then transferred to the acceptor end of tRNA(Ala). Also edits incorrectly charged Ser-tRNA(Ala) and Gly-tRNA(Ala) via its editing domain. This is Alanine--tRNA ligase from Akkermansia muciniphila (strain ATCC BAA-835 / DSM 22959 / JCM 33894 / BCRC 81048 / CCUG 64013 / CIP 107961 / Muc).